The following is a 2290-amino-acid chain: Protein Ycf2 (2290 aa).

1644–1651 (GSIGTGRS) is a binding site for ATP.

It belongs to the Ycf2 family.

It is found in the plastid. It localises to the chloroplast stroma. Probable ATPase of unknown function. Its presence in a non-photosynthetic plant (Epifagus virginiana) and experiments in tobacco indicate that it has an essential function which is probably not related to photosynthesis. The chain is Protein Ycf2 from Barbarea verna (Land cress).